Here is a 221-residue protein sequence, read N- to C-terminus: MDEEWTPRTELGRLVANGEIKTISEALHSKLPLKEYQIVDYLIPDLKDEVINIERAQRMTDSGRRMNYSITAVVGNGNGYVGVGRGKAKEAAPAIKKAIDNAKLNIIEIKRGCGSWECGCGKPHTLPFLVNGKSGSVSVTLKPAPQGVGLAVGDVVKVILRMAGIDDAWGFAAGHTKTTVNYALATFDALKKTVSIKINPKINLSTPIYVGGIGNAGSNKD.

One can recognise an S5 DRBM domain in the interval 46-109 (LKDEVINIER…DNAKLNIIEI (64 aa)).

This sequence belongs to the universal ribosomal protein uS5 family. As to quaternary structure, part of the 30S ribosomal subunit. Contacts protein S4.

Functionally, with S4 and S12 plays an important role in translational accuracy. This Picrophilus torridus (strain ATCC 700027 / DSM 9790 / JCM 10055 / NBRC 100828 / KAW 2/3) protein is Small ribosomal subunit protein uS5.